The chain runs to 265 residues: Cyclin-C (265 aa).

In terms of domain architecture, Cyclin N-terminal spans 48-151 (IQVLGEQLKL…LLENLDCCLI (104 aa)).

This sequence belongs to the cyclin family. Cyclin C subfamily. Component of the Cdk8 module of the Mediator complex.

It is found in the nucleus. In terms of biological role, component of the Mediator complex, a coactivator involved in regulated gene transcription of nearly all RNA polymerase II-dependent genes. Mediator functions as a bridge to convey information from gene-specific regulatory proteins to the basal RNA polymerase II transcription machinery. Mediator is recruited to promoters by direct interactions with regulatory proteins and serves as a scaffold for the assembly of a functional preinitiation complex with RNA polymerase II and the general transcription factors. Binds to and activates cyclin-dependent kinase Cdk8 that phosphorylates the CTD (C-terminal domain) of the large subunit of RNA polymerase II (RNAp II), which may inhibit the formation of a transcription initiation complex. This is Cyclin-C (CycC) from Aedes aegypti (Yellowfever mosquito).